We begin with the raw amino-acid sequence, 193 residues long: Translocation protein SEC72 (193 aa).

In terms of assembly, component of the heterotetrameric Sec62/63complex composed of SEC62, SEC63, SEC71 and SEC72. The Sec62/63 complex associates with the Sec61 complex to form the Sec complex. May interact with protein YLR301W. Part of a complex consisting of KAR2, SEC63, SEC66 and SEC72.

Its subcellular location is the cytoplasm. Its function is as follows. Acts as a non-essential component of the Sec62/63 complex which is involved in SRP-independent post-translational translocation across the endoplasmic reticulum (ER) and functions together with the Sec61 complex and KAR2 in a channel-forming translocon complex. A cycle of assembly and disassembly of Sec62/63 complex from SEC61 may govern the activity of the translocon. SEC72 may be involved in signal peptide recognition for a defined subset of leader peptides, or may increase the efficiency of unusual or 'difficult' secretory precursors to the translocation pore, it may be that this protein binds charged leader peptides to the membrane until they engage the translocation apparatus. This is Translocation protein SEC72 (SEC72) from Saccharomyces cerevisiae (strain ATCC 204508 / S288c) (Baker's yeast).